The chain runs to 637 residues: 1-deoxy-D-xylulose-5-phosphate synthase 1 (637 aa).

Thiamine diphosphate contacts are provided by residues histidine 74 and 115–117 (GHS). A Mg(2+)-binding site is contributed by aspartate 146. Residues 147 to 148 (GS), asparagine 175, tyrosine 286, and glutamate 368 each bind thiamine diphosphate. Asparagine 175 serves as a coordination point for Mg(2+).

The protein belongs to the transketolase family. DXPS subfamily. In terms of assembly, homodimer. Mg(2+) is required as a cofactor. Thiamine diphosphate serves as cofactor.

It catalyses the reaction D-glyceraldehyde 3-phosphate + pyruvate + H(+) = 1-deoxy-D-xylulose 5-phosphate + CO2. Its pathway is metabolic intermediate biosynthesis; 1-deoxy-D-xylulose 5-phosphate biosynthesis; 1-deoxy-D-xylulose 5-phosphate from D-glyceraldehyde 3-phosphate and pyruvate: step 1/1. Its function is as follows. Catalyzes the acyloin condensation reaction between C atoms 2 and 3 of pyruvate and glyceraldehyde 3-phosphate to yield 1-deoxy-D-xylulose-5-phosphate (DXP). The sequence is that of 1-deoxy-D-xylulose-5-phosphate synthase 1 from Geobacter sulfurreducens (strain ATCC 51573 / DSM 12127 / PCA).